Reading from the N-terminus, the 480-residue chain is Ribulose bisphosphate carboxylase large chain (480 aa).

A propeptide spanning residues 1–2 is cleaved from the precursor; the sequence is MS. The residue at position 3 (P3) is an N-acetylproline. K14 is subject to N6,N6,N6-trimethyllysine. Substrate is bound by residues N123 and T173. Catalysis depends on K175, which acts as the Proton acceptor. Residue K177 participates in substrate binding. K201, D203, and E204 together coordinate Mg(2+). K201 bears the N6-carboxylysine mark. H294 acts as the Proton acceptor in catalysis. Residues R295, H327, and S379 each coordinate substrate.

It belongs to the RuBisCO large chain family. Type I subfamily. Heterohexadecamer of 8 large chains and 8 small chains; disulfide-linked. The disulfide link is formed within the large subunit homodimers. Requires Mg(2+) as cofactor. Post-translationally, the disulfide bond which can form in the large chain dimeric partners within the hexadecamer appears to be associated with oxidative stress and protein turnover.

The protein localises to the plastid. It is found in the chloroplast. The catalysed reaction is 2 (2R)-3-phosphoglycerate + 2 H(+) = D-ribulose 1,5-bisphosphate + CO2 + H2O. The enzyme catalyses D-ribulose 1,5-bisphosphate + O2 = 2-phosphoglycolate + (2R)-3-phosphoglycerate + 2 H(+). Its function is as follows. RuBisCO catalyzes two reactions: the carboxylation of D-ribulose 1,5-bisphosphate, the primary event in carbon dioxide fixation, as well as the oxidative fragmentation of the pentose substrate in the photorespiration process. Both reactions occur simultaneously and in competition at the same active site. The chain is Ribulose bisphosphate carboxylase large chain from Acorus calamus var. americanus (American sweet flag).